The sequence spans 290 residues: Ribosomal protein L11 methyltransferase (290 aa).

Residues threonine 136, glycine 157, aspartate 179, and asparagine 222 each contribute to the S-adenosyl-L-methionine site.

This sequence belongs to the methyltransferase superfamily. PrmA family.

It localises to the cytoplasm. The catalysed reaction is L-lysyl-[protein] + 3 S-adenosyl-L-methionine = N(6),N(6),N(6)-trimethyl-L-lysyl-[protein] + 3 S-adenosyl-L-homocysteine + 3 H(+). Methylates ribosomal protein L11. In Porphyromonas gingivalis (strain ATCC BAA-308 / W83), this protein is Ribosomal protein L11 methyltransferase.